The following is a 90-amino-acid chain: MAFVRSLLGAKKILSRSTAAGSAAPKGFLAVYVGESQKKRYLVPLSYLSQPSFQALLSKSEEEFGFAHPMGGLTIPCPEDTFINVTSRLQ.

Belongs to the ARG7 family. In terms of assembly, interacts with and inhibits PP2C-D subfamily of type 2C phosphatases such as PP2C67/PP2C-D1, PP2C64/PP2C-D5 and PP2C46/PP2C-D6.

Its subcellular location is the cell membrane. Its function is as follows. Provide a mechanistic link between auxin and plasma membrane H(+)-ATPases (PM H(+)-ATPases, e.g. AHA1 and AHA2), and triggers PM H(+)-ATPases activity by promoting phosphorylation of their C-terminal autoinhibitory domain as a result of PP2C-D subfamily of type 2C phosphatases inhibition, thus leading to the acidification of the apoplast and the facilitation of solutes and water uptake to drive cell expansion. Prevents the apical hook maintenance of etiolated seedlings. Functions as positive effectors of cell expansion through modulation of auxin transport. In Arabidopsis thaliana (Mouse-ear cress), this protein is Auxin-responsive protein SAUR19.